The sequence spans 255 residues: 2-(S)-hydroxypropyl-CoM dehydrogenase 3 (255 aa).

NAD(+)-binding positions include I19, D38, 64–65 (DV), and N91. (S)-2-hydroxypropyl-coenzyme M-binding residues include S143 and Y156. The active-site Proton acceptor is the Y156. Residue K160 coordinates NAD(+). T188 contacts (S)-2-hydroxypropyl-coenzyme M. 189-193 (VTSTG) contacts NAD(+). Y215 contacts (S)-2-hydroxypropyl-coenzyme M.

This sequence belongs to the short-chain dehydrogenases/reductases (SDR) family. In terms of assembly, homotetramer.

The catalysed reaction is (S)-2-hydroxypropyl-coenzyme M + NAD(+) = 2-oxopropyl-coenzyme M + NADH + H(+). With respect to regulation, not inhibited by 2-(2-methyl-2-hydroxypropylthio)ethanesulfonate (M-HPC), an achiral analog of both R-HPC and S-HPC. Functionally, involved in aliphatic epoxide carboxylation. Catalyzes the reversible oxidation of (2S)-2-hydroxypropyl-coenzyme M (S-HPC) to 2-oxopropyl-coenzyme M (2-KPC). The enzyme is highly specific for the S enantiomers. In vitro can also use the aliphatic ketone 2-butanone and the aliphatic alcohol 2-propanol, and shows an inherent stereoselectivity for 2-butanone reduction. The polypeptide is 2-(S)-hydroxypropyl-CoM dehydrogenase 3 (Xanthobacter autotrophicus (strain ATCC BAA-1158 / Py2)).